A 244-amino-acid polypeptide reads, in one-letter code: 1-(5-phosphoribosyl)-5-[(5-phosphoribosylamino)methylideneamino] imidazole-4-carboxamide isomerase (244 aa).

Asp-10 acts as the Proton acceptor in catalysis. Asp-129 acts as the Proton donor in catalysis.

Belongs to the HisA/HisF family.

The protein localises to the cytoplasm. It catalyses the reaction 1-(5-phospho-beta-D-ribosyl)-5-[(5-phospho-beta-D-ribosylamino)methylideneamino]imidazole-4-carboxamide = 5-[(5-phospho-1-deoxy-D-ribulos-1-ylimino)methylamino]-1-(5-phospho-beta-D-ribosyl)imidazole-4-carboxamide. Its pathway is amino-acid biosynthesis; L-histidine biosynthesis; L-histidine from 5-phospho-alpha-D-ribose 1-diphosphate: step 4/9. The sequence is that of 1-(5-phosphoribosyl)-5-[(5-phosphoribosylamino)methylideneamino] imidazole-4-carboxamide isomerase from Rhodococcus opacus (strain B4).